A 473-amino-acid chain; its full sequence is Uronate isomerase (473 aa).

Belongs to the metallo-dependent hydrolases superfamily. Uronate isomerase family.

The catalysed reaction is D-glucuronate = D-fructuronate. It catalyses the reaction aldehydo-D-galacturonate = keto-D-tagaturonate. It participates in carbohydrate metabolism; pentose and glucuronate interconversion. In Bacillus subtilis (strain 168), this protein is Uronate isomerase (uxaC).